Consider the following 481-residue polypeptide: Protein DETOXIFICATION 12 (481 aa).

The next 12 membrane-spanning stretches (helical) occupy residues 38–58 (LIFF…LQIV), 76–96 (LASS…SCAL), 117–137 (YTAM…WFNM), 154–174 (AGKY…LQPL), 187–207 (LLIT…FLVY), 214–234 (LGGA…LGSF), 267–287 (AAMI…SGLL), 296–316 (VLSV…AIAA), 336–356 (IVVY…SMSL), 380–400 (MAPL…LSGI), 415–435 (LGAF…WIHL), and 438–458 (VGLW…LALV).

It belongs to the multi antimicrobial extrusion (MATE) (TC 2.A.66.1) family.

The protein localises to the membrane. The sequence is that of Protein DETOXIFICATION 12 from Arabidopsis thaliana (Mouse-ear cress).